Consider the following 39-residue polypeptide: MTIDRTFPIFTVRWLAVHGLAVPTVSFLGSISAMQFIQR.

A helical membrane pass occupies residues 14-30 (WLAVHGLAVPTVSFLGS). Residue histidine 18 participates in heme binding.

Belongs to the PsbE/PsbF family. In terms of assembly, heterodimer of an alpha subunit and a beta subunit. PSII is composed of 1 copy each of membrane proteins PsbA, PsbB, PsbC, PsbD, PsbE, PsbF, PsbH, PsbI, PsbJ, PsbK, PsbL, PsbM, PsbT, PsbX, PsbY, PsbZ, Psb30/Ycf12, at least 3 peripheral proteins of the oxygen-evolving complex and a large number of cofactors. It forms dimeric complexes. The cofactor is heme b.

The protein resides in the plastid. It is found in the chloroplast thylakoid membrane. This b-type cytochrome is tightly associated with the reaction center of photosystem II (PSII). PSII is a light-driven water:plastoquinone oxidoreductase that uses light energy to abstract electrons from H(2)O, generating O(2) and a proton gradient subsequently used for ATP formation. It consists of a core antenna complex that captures photons, and an electron transfer chain that converts photonic excitation into a charge separation. This Lotus japonicus (Lotus corniculatus var. japonicus) protein is Cytochrome b559 subunit beta.